Reading from the N-terminus, the 270-residue chain is Probable ribosomal RNA small subunit methyltransferase A (270 aa).

6 residues coordinate S-adenosyl-L-methionine: histidine 19, leucine 21, glycine 46, glutamate 67, aspartate 92, and asparagine 107.

This sequence belongs to the class I-like SAM-binding methyltransferase superfamily. rRNA adenine N(6)-methyltransferase family. RsmA subfamily.

It localises to the cytoplasm. Specifically dimethylates two adjacent adenosines in the loop of a conserved hairpin near the 3'-end of 16S rRNA in the 30S particle. May play a critical role in biogenesis of 30S subunits. In Methanococcoides burtonii (strain DSM 6242 / NBRC 107633 / OCM 468 / ACE-M), this protein is Probable ribosomal RNA small subunit methyltransferase A.